A 426-amino-acid polypeptide reads, in one-letter code: Serine--tRNA ligase (426 aa).

233–235 (TAE) contacts L-serine. 264 to 266 (RSE) serves as a coordination point for ATP. Position 287 (Glu-287) interacts with L-serine. 351–354 (EISS) is a binding site for ATP. Ser-387 lines the L-serine pocket.

The protein belongs to the class-II aminoacyl-tRNA synthetase family. Type-1 seryl-tRNA synthetase subfamily. Homodimer. The tRNA molecule binds across the dimer.

It localises to the cytoplasm. It catalyses the reaction tRNA(Ser) + L-serine + ATP = L-seryl-tRNA(Ser) + AMP + diphosphate + H(+). The catalysed reaction is tRNA(Sec) + L-serine + ATP = L-seryl-tRNA(Sec) + AMP + diphosphate + H(+). The protein operates within aminoacyl-tRNA biosynthesis; selenocysteinyl-tRNA(Sec) biosynthesis; L-seryl-tRNA(Sec) from L-serine and tRNA(Sec): step 1/1. Functionally, catalyzes the attachment of serine to tRNA(Ser). Is also able to aminoacylate tRNA(Sec) with serine, to form the misacylated tRNA L-seryl-tRNA(Sec), which will be further converted into selenocysteinyl-tRNA(Sec). This is Serine--tRNA ligase from Pseudomonas syringae pv. syringae (strain B728a).